Here is a 380-residue protein sequence, read N- to C-terminus: MTHIPAAPAAVDYLLLTPGPLSTTATVRAAMLQDSCTWDADYNQGVVEPIRRELVRLAAGPEYQSDYSAVLLQGSGSYVVESVLGSAIGVDECLLIINNGAYGARMGEMARCLGLRHHELDCGETTRPEAAAIEAMLVRHPEITHLAMVHCETTTGMLNPLEEVAALCQRRGIRLIVDAMSSFGGIPIDMGRLGIEFLISSANKCIQGVPGFGFVIARRAALAACAGCARSVSLDLHAQWQTMEQQGGKWRFTSPTHTVLAFAQALRELDEEGGIAARHRRYRDNQRTLVDGMAALGFAPLLPEQWQSPIITAFYSPAHPDYRFADFYQRLKAQGFVIYPGKVSQADCFRIGNIGDVTPARVRCLLVAMASACYWQGDAR.

K204 is subject to N6-(pyridoxal phosphate)lysine.

This sequence belongs to the class-V pyridoxal-phosphate-dependent aminotransferase family. PhnW subfamily. Homodimer. The cofactor is pyridoxal 5'-phosphate.

It catalyses the reaction (2-aminoethyl)phosphonate + pyruvate = phosphonoacetaldehyde + L-alanine. In terms of biological role, involved in phosphonate degradation. The protein is 2-aminoethylphosphonate--pyruvate transaminase of Aeromonas hydrophila subsp. hydrophila (strain ATCC 7966 / DSM 30187 / BCRC 13018 / CCUG 14551 / JCM 1027 / KCTC 2358 / NCIMB 9240 / NCTC 8049).